The primary structure comprises 475 residues: Ribulose bisphosphate carboxylase large chain (475 aa).

Positions M1 to S2 are excised as a propeptide. At P3 the chain carries N-acetylproline. K14 carries the N6,N6,N6-trimethyllysine modification. Substrate is bound by residues N123 and T173. K175 (proton acceptor) is an active-site residue. K177 lines the substrate pocket. K201, D203, and E204 together coordinate Mg(2+). K201 is subject to N6-carboxylysine. The active-site Proton acceptor is the H294. 3 residues coordinate substrate: R295, H327, and S379.

Belongs to the RuBisCO large chain family. Type I subfamily. In terms of assembly, heterohexadecamer of 8 large chains and 8 small chains; disulfide-linked. The disulfide link is formed within the large subunit homodimers. It depends on Mg(2+) as a cofactor. Post-translationally, the disulfide bond which can form in the large chain dimeric partners within the hexadecamer appears to be associated with oxidative stress and protein turnover.

It is found in the plastid. The protein resides in the chloroplast. It catalyses the reaction 2 (2R)-3-phosphoglycerate + 2 H(+) = D-ribulose 1,5-bisphosphate + CO2 + H2O. It carries out the reaction D-ribulose 1,5-bisphosphate + O2 = 2-phosphoglycolate + (2R)-3-phosphoglycerate + 2 H(+). In terms of biological role, ruBisCO catalyzes two reactions: the carboxylation of D-ribulose 1,5-bisphosphate, the primary event in carbon dioxide fixation, as well as the oxidative fragmentation of the pentose substrate in the photorespiration process. Both reactions occur simultaneously and in competition at the same active site. In Pinus koraiensis (Korean pine), this protein is Ribulose bisphosphate carboxylase large chain.